The following is a 95-amino-acid chain: Suppressor of silencing 2b (95 aa).

A homotetramerization region spans residues 8–18 (LHEIIRKLERM). Residues 8–40 (LHEIIRKLERMNQKKQAQRKRHKLNRKERGHKS) adopt a coiled-coil conformation. Positions 16 to 49 (ERMNQKKQAQRKRHKLNRKERGHKSPSEQRRSEL) are disordered. Over residues 23–37 (QAQRKRHKLNRKERG) the composition is skewed to basic residues. A Nuclear localization signal motif is present at residues 26–30 (RKRHK). A compositionally biased stretch (basic and acidic residues) spans 38–49 (HKSPSEQRRSEL).

This sequence belongs to the cucumovirus/ilarvirus protein 2b family. Homodimer. Homotetramer (dimer of dimers).

It localises to the host nucleus. Functionally, acts as a suppressor of RNA-mediated gene silencing, also known as post-transcriptional gene silencing (PTGS), a mechanism of plant viral defense that limits the accumulation of viral RNAs. Forms a homodimer to measure siRNA duplex in a length-preference mode. Binds to both siRNA duplexes (19bp) and long siRNA duplexes (30bp). The protein is Suppressor of silencing 2b of Canna (Florist's daisy).